Here is a 319-residue protein sequence, read N- to C-terminus: Multivesicular body subunit 12B (319 aa).

The interval 1-50 is disordered; it reads MRSCFCVRRSRDPPPPQPPPPPPQRGTDQSTMPEVKDLSEALPETSMDPI. Residues 13-24 are compositionally biased toward pro residues; sequence PPPPQPPPPPPQ. Phosphoserine is present on residues serine 46 and serine 101. An MABP domain is found at 47–193; it reads MDPITGVGVV…SMGIWYRMGR (147 aa). Threonine 122, threonine 204, and threonine 205 each carry phosphothreonine. Residues 195–222 are disordered; that stretch reads PRNHDSSQPTTPSQSSAASTPAPNLPRH. Over residues 200-216 the composition is skewed to low complexity; sequence SSQPTTPSQSSAASTPA. Serine 224 carries the post-translational modification Phosphoserine. The UMA domain occupies 254–303; that stretch reads MDGVPFMISEKFSCVPESMQPFDLLGITIKSLAEIEKEYEYSFRTEQSAA. The interval 299–319 is disordered; the sequence is EQSAAARLPPSPTRCQQIPQS. Serine 309 carries the phosphoserine modification.

The protein belongs to the MVB12 family. In terms of assembly, component of the ESCRT-I complex (endosomal sorting complex required for transport I) which consists of TSG101, VPS28, a VPS37 protein (VPS37A to -D) and MVB12A or MVB12B in a 1:1:1:1 stoichiometry. Interacts with TSG101; the association appears to be mediated by the TSG101-VPS37 binary subcomplex. Interacts with VPS28. Interacts with VPS37B; the association appears to be mediated by the TSG101-VPS37 binary subcomplex. Interacts with VPS37C; the association appears to be mediated by the TSG101-VPS37 binary subcomplex.

It is found in the endosome. The protein localises to the late endosome membrane. Its function is as follows. Component of the ESCRT-I complex, a regulator of vesicular trafficking process. Required for the sorting of endocytic ubiquitinated cargos into multivesicular bodies. The sequence is that of Multivesicular body subunit 12B (MVB12B) from Homo sapiens (Human).